A 556-amino-acid polypeptide reads, in one-letter code: Phenylalanine--tRNA ligase beta subunit (556 aa).

Residues 278–353 form the B5 domain; that stretch reads LTPKEFEVEL…IAYGYNNIEP (76 aa). Mg(2+)-binding residues include Asp-331, Asp-337, Glu-340, and Asp-341.

Belongs to the phenylalanyl-tRNA synthetase beta subunit family. Type 2 subfamily. In terms of assembly, tetramer of two alpha and two beta subunits. Mg(2+) serves as cofactor.

It is found in the cytoplasm. The enzyme catalyses tRNA(Phe) + L-phenylalanine + ATP = L-phenylalanyl-tRNA(Phe) + AMP + diphosphate + H(+). This is Phenylalanine--tRNA ligase beta subunit from Pyrococcus horikoshii (strain ATCC 700860 / DSM 12428 / JCM 9974 / NBRC 100139 / OT-3).